A 1309-amino-acid chain; its full sequence is Lysine-specific demethylase 2B (1309 aa).

A Phosphoserine modification is found at Ser26. The JmjC domain maps to Phe147–Asp315. A substrate-binding site is contributed by Thr208. Residues His211 and Asp213 each contribute to the Fe cation site. Lys228 contributes to the substrate binding site. Residue His283 participates in Fe cation binding. Over residues Asp378–Asp403 the composition is skewed to acidic residues. Residues Asp378 to Ser476 form a disordered region. A compositionally biased stretch (basic and acidic residues) spans Gly404–Thr413. Residues Asp415–Pro424 are compositionally biased toward low complexity. Ser447 and Ser450 each carry phosphoserine. Residue Thr466 is modified to Phosphothreonine. Over residues Pro467–Ser476 the composition is skewed to polar residues. Phosphoserine is present on Ser470. The CXXC-type zinc-finger motif lies at Ala579–Ile625. Positions 586, 589, 592, 597, 600, 603, 619, 624, 635, 638, 661, 664, 669, 672, 692, and 695 each coordinate Zn(2+). A PHD-type zinc finger spans residues Thr632–Ala698. Disordered stretches follow at residues Lys700–Pro816 and Gln828–Pro1005. Residues Lys722–His772 show a composition bias toward basic and acidic residues. Positions Ser792–Pro816 are enriched in low complexity. Residues Lys830 and Lys863 each participate in a glycyl lysine isopeptide (Lys-Gly) (interchain with G-Cter in SUMO2) cross-link. The span at Ser883–Pro892 shows a compositional bias: polar residues. Residues Lys905 to Leu914 show a composition bias toward basic residues. The span at Val915–Lys933 shows a compositional bias: basic and acidic residues. The stretch at Asn916–Gln944 forms a coiled coil. A Phosphoserine modification is found at Ser924. Polar residues predominate over residues Thr934–Ile946. Residues Ser948 and Ser952 each carry the phosphoserine modification. Residues Asp955–His968 are compositionally biased toward basic and acidic residues. Phosphoserine is present on residues Ser991 and Ser1004. The 47-residue stretch at Asp1032 to Ile1078 folds into the F-box domain. 6 LRR repeats span residues Trp1106–Leu1127, Leu1129–Trp1155, Gly1195–Tyr1220, Cys1221–Asp1250, Cys1251–Tyr1275, and Cys1276–Ser1309.

This sequence belongs to the JHDM1 histone demethylase family. In terms of assembly, interacts with SKP1, forming heterodimers. The KDM2B-SKP1 heterodimeric complex interacts with the PCGF1-BCORL heterodimeric complex to form a homotetrameric polycomb repression complex 1 (PRC1.1). Directly interacts with CUL1. The SKP1-KDM2B interacts with UBB. Fe(2+) is required as a cofactor.

It is found in the nucleus. It localises to the nucleolus. The protein localises to the chromosome. The catalysed reaction is N(6),N(6)-dimethyl-L-lysyl(36)-[histone H3] + 2 2-oxoglutarate + 2 O2 = L-lysyl(36)-[histone H3] + 2 formaldehyde + 2 succinate + 2 CO2. With respect to regulation, histone demethylase activity is inhibited by fumarate. In terms of biological role, histone demethylase that demethylates 'Lys-4' and 'Lys-36' of histone H3, thereby playing a central role in histone code. Preferentially demethylates trimethylated H3 'Lys-4' and dimethylated H3 'Lys-36' residue while it has weak or no activity for mono- and tri-methylated H3 'Lys-36'. Preferentially binds the transcribed region of ribosomal RNA and represses the transcription of ribosomal RNA genes which inhibits cell growth and proliferation. May also serve as a substrate-recognition component of the SCF (SKP1-CUL1-F-box protein)-type E3 ubiquitin ligase complex. This chain is Lysine-specific demethylase 2B (Kdm2b), found in Mus musculus (Mouse).